Reading from the N-terminus, the 215-residue chain is Ras-related protein RAB1BV (215 aa).

Residues 22-29 (GDSGVGKS), 70-74 (DTAGQ), and 128-131 (NKAD) contribute to the GTP site. The disordered stretch occupies residues 183 to 215 (DSDTRQEAQPSITIKPADQSGNQAAAKSACCGS). S-geranylgeranyl cysteine attachment occurs at residues Cys-212 and Cys-213.

Belongs to the small GTPase superfamily. Rab family.

It localises to the cell membrane. The protein is Ras-related protein RAB1BV (RAB1BV) of Beta vulgaris (Sugar beet).